The sequence spans 308 residues: Ribosomal RNA small subunit methyltransferase A (308 aa).

The S-adenosyl-L-methionine site is built by Asn-35, Val-37, Gly-62, Glu-83, Asp-113, and Asn-136.

It belongs to the class I-like SAM-binding methyltransferase superfamily. rRNA adenine N(6)-methyltransferase family. RsmA subfamily.

It localises to the cytoplasm. It catalyses the reaction adenosine(1518)/adenosine(1519) in 16S rRNA + 4 S-adenosyl-L-methionine = N(6)-dimethyladenosine(1518)/N(6)-dimethyladenosine(1519) in 16S rRNA + 4 S-adenosyl-L-homocysteine + 4 H(+). Specifically dimethylates two adjacent adenosines (A1518 and A1519) in the loop of a conserved hairpin near the 3'-end of 16S rRNA in the 30S particle. May play a critical role in biogenesis of 30S subunits. The chain is Ribosomal RNA small subunit methyltransferase A from Bifidobacterium longum (strain NCC 2705).